The following is a 280-amino-acid chain: Ribosomal RNA-processing protein 7 homolog A (280 aa).

One can recognise an RRM domain in the interval 59–159 (RTLFVLNVPP…SGIHKWISDY (101 aa)). Ser-99 is subject to Phosphoserine.

The protein belongs to the RRP7 family. Part of the small subunit (SSU) processome, composed of more than 70 proteins and the RNA chaperone small nucleolar RNA (snoRNA) U3. Interacts with NOL6; required for NOL6 localization to nucleolus. As to expression, expressed in the apical radial glial cells in the developing brain.

It is found in the nucleus. Its subcellular location is the nucleolus. The protein localises to the cell projection. The protein resides in the cilium. It localises to the cytoplasm. It is found in the cytoskeleton. Its subcellular location is the microtubule organizing center. The protein localises to the centrosome. Functionally, nucleolar protein that is involved in ribosomal RNA (rRNA) processing. Also plays a role in primary cilia resorption, and cell cycle progression in neurogenesis and neocortex development. Part of the small subunit (SSU) processome, first precursor of the small eukaryotic ribosomal subunit. During the assembly of the SSU processome in the nucleolus, many ribosome biogenesis factors, an RNA chaperone and ribosomal proteins associate with the nascent pre-rRNA and work in concert to generate RNA folding, modifications, rearrangements and cleavage as well as targeted degradation of pre-ribosomal RNA by the RNA exosome. The polypeptide is Ribosomal RNA-processing protein 7 homolog A (Homo sapiens (Human)).